A 145-amino-acid polypeptide reads, in one-letter code: 3-hydroxyacyl-[acyl-carrier-protein] dehydratase FabZ (145 aa).

His47 is an active-site residue.

The protein belongs to the thioester dehydratase family. FabZ subfamily.

It localises to the cytoplasm. It carries out the reaction a (3R)-hydroxyacyl-[ACP] = a (2E)-enoyl-[ACP] + H2O. Involved in unsaturated fatty acids biosynthesis. Catalyzes the dehydration of short chain beta-hydroxyacyl-ACPs and long chain saturated and unsaturated beta-hydroxyacyl-ACPs. This is 3-hydroxyacyl-[acyl-carrier-protein] dehydratase FabZ from Aromatoleum aromaticum (strain DSM 19018 / LMG 30748 / EbN1) (Azoarcus sp. (strain EbN1)).